A 630-amino-acid chain; its full sequence is MKDKIPTDYDRYLFHQGSHYKSYEFLGAHPCEENGKTGVRFSVWAPNAAEVRVIGSFNNWDGNINPMERINDSGIWTTFIPEAKKGDLYKYEILTKYGDTRIKSDPYAFYAERKPKTASIVYSLNNYKWNDKKWMDKKKDYTVYNKPVLIYEVHLGSWKRKENGDYLTYRELANELVEYVKDMGYNYIELLPVAEHPFDGSWGYQLTNYYSVTSRYGTPEDFMYFIDKCHQNGIGVILDWVPGHFCKDDHGLRLFDGTALYEPQDPRKAENEWDTLNFDFNQPEVWSFLISNAVFWFDIYHIDGLRVDAVSNLLYLNHGKGDGEWVPNKYGGHENLEAIDFIKTLNKVIFEYFPNPLMIAEESSAWPLVTYPAHLGGLGFNYKWNMGWMNDTLEYMEMDSIYRKYHHNLLTFSFMYMFSENFVLPLSHDEVVHGKKSLLDKMPGDYWQKFANLRTLYGYMMGHPGKKLLFMGGEFGQFIEWNYKQGLDWLLLDYDMHKKLQNYVRELNYFYRQEKTLWEGDHEDGGFEWIDPHDSEQSIITFMRKNKDGSDYTIIVCNFTPEVRHNYRIGVPEFKEYKEVFNSDLEKFGGSGQKNSTIIQPSEQPWHNRPYSIEITIPPLATIFFKPLNQ.

D308 (nucleophile) is an active-site residue. E361 functions as the Proton donor in the catalytic mechanism.

This sequence belongs to the glycosyl hydrolase 13 family. GlgB subfamily. As to quaternary structure, monomer.

The enzyme catalyses Transfers a segment of a (1-&gt;4)-alpha-D-glucan chain to a primary hydroxy group in a similar glucan chain.. Its pathway is glycan biosynthesis; glycogen biosynthesis. In terms of biological role, catalyzes the formation of the alpha-1,6-glucosidic linkages in glycogen by scission of a 1,4-alpha-linked oligosaccharide from growing alpha-1,4-glucan chains and the subsequent attachment of the oligosaccharide to the alpha-1,6 position. This chain is 1,4-alpha-glucan branching enzyme GlgB, found in Halothermothrix orenii (strain H 168 / OCM 544 / DSM 9562).